A 211-amino-acid chain; its full sequence is Endonuclease Htp3 (211 aa).

Positions 1–20 (MLEVPVWIPILAFAVGLGLG) are cleaved as a signal peptide. Residues 48-51 (RTLR) carry the RxLR motif. The TNase-like domain maps to 48-198 (RTLRGKVVSV…REKRVNIWSL (151 aa)). Aspartate 77 contacts Ca(2+). Arginine 90 is an active-site residue. A Ca(2+)-binding site is contributed by aspartate 95. Residues glutamate 98 and arginine 138 contribute to the active site. A glycan (N-linked (GlcNAc...) asparagine) is linked at asparagine 153. A binding to the host cell surface region spans residues 200–211 (KRETPAQYKARK).

In the N-terminal section; belongs to the RxLR effector family. This sequence in the C-terminal section; belongs to the LCL3 family. Interacts with the host cell surface endoplasmin gp96, in order to get translocated into to host cell. Interacts with the effector Htp1, in order to get released from vesicles into the host cytosol.

The protein localises to the secreted. The protein resides in the host cytoplasm. It localises to the host cytosol. Its activity is regulated as follows. The nuclease activity shows a general salt dependency with a clear reduction by magnesium and sulfate ions. Its function is as follows. Effector involved in the disease saprolegniosis in salmonids and other freshwater fish, resulting in considerable economic losses in aquaculture. Within the host fish cells, Htp3 is released from vesicles into host cytosol where it degrades nucleic acids. This Saprolegnia parasitica (strain CBS 223.65) protein is Endonuclease Htp3 (HTP3).